We begin with the raw amino-acid sequence, 503 residues long: ATP synthase subunit alpha (503 aa).

169-176 contributes to the ATP binding site; that stretch reads GDRKTGKT.

It belongs to the ATPase alpha/beta chains family. F-type ATPases have 2 components, CF(1) - the catalytic core - and CF(0) - the membrane proton channel. CF(1) has five subunits: alpha(3), beta(3), gamma(1), delta(1), epsilon(1). CF(0) has three main subunits: a(1), b(2) and c(9-12). The alpha and beta chains form an alternating ring which encloses part of the gamma chain. CF(1) is attached to CF(0) by a central stalk formed by the gamma and epsilon chains, while a peripheral stalk is formed by the delta and b chains.

It localises to the cell membrane. It carries out the reaction ATP + H2O + 4 H(+)(in) = ADP + phosphate + 5 H(+)(out). Its activity is regulated as follows. Increases 2-fold following exposure to low pH. Functionally, produces ATP from ADP in the presence of a proton gradient across the membrane. The alpha chain is a regulatory subunit. This chain is ATP synthase subunit alpha, found in Lactobacillus acidophilus (strain ATCC 700396 / NCK56 / N2 / NCFM).